The sequence spans 566 residues: Interleukin-1 receptor-like 1 (566 aa).

The N-terminal stretch at 1 to 26 (MIGKWRMGLWALAILTVPMYFIVTEG) is a signal peptide. Ig-like C2-type domains follow at residues 27–109 (RKTS…LNVT), 120–207 (PDYM…RSFT), and 217–323 (PVIT…VRLR). Residues 27-331 (RKTSWGLENE…LRRKQPIDHQ (305 aa)) are Extracellular-facing. The cysteines at positions 42 and 93 are disulfide-linked. N-linked (GlcNAc...) asparagine glycans are attached at residues asparagine 107, asparagine 146, and asparagine 194. Disulfide bonds link cysteine 117-cysteine 157 and cysteine 139-cysteine 187. Residues 204–216 (RSFTVEEKGFSTF) are flexible linker. Residues asparagine 225, asparagine 258, and asparagine 277 are each glycosylated (N-linked (GlcNAc...) asparagine). Intrachain disulfides connect cysteine 240/cysteine 307 and cysteine 243/cysteine 286. Lysine 325 is covalently cross-linked (Glycyl lysine isopeptide (Lys-Gly) (interchain with G-Cter in ubiquitin)). A helical transmembrane segment spans residues 332–354 (STYYIVAGCSLLLMFINVLVIVL). Topologically, residues 355-566 (KVFWIEVALF…GKVCLDLKHF (212 aa)) are cytoplasmic. Positions 379–539 (KLYDAYIIYP…KFWKHVRYQM (161 aa)) constitute a TIR domain. A Phosphoserine modification is found at serine 441. The active site involves glutamate 465.

It belongs to the interleukin-1 receptor family. Interacts with MYD88, IRAK1, IRAK4, and TRAF6. Bound to its ligand IL-33, interacts with IL1RAP to form the minimal interleukin-33 signaling complex with a 1:1:1 stoichiometry. Interacts with KIT (bound to KITLG/SCF). A mast cell-specific KITLG/SCF-induced interleukin-33 signaling complex contains IL1RL1, IL1RAP, KIT and MYD88. Interacts with TMED1. Phosphorylated by GSK3B at Ser-441; leading to proteasomal degradation. Post-translationally, ubiquitinated at Lys-325 in a FBXL19-mediated manner; leading to proteasomal degradation. Ubiquitination by TRAF6 via 'Lys-27'-linked polyubiquitination and deubiquitination by USP38 serves as a critical regulatory mechanism for fine-tuning IL1RL1-mediated inflammatory response. In terms of tissue distribution, isoform A is detected in spleen, lung, bone marrow and lymh node. Isoform B is predominant in fibroblasts.

It localises to the cell membrane. The protein resides in the secreted. The catalysed reaction is NAD(+) + H2O = ADP-D-ribose + nicotinamide + H(+). Functionally, receptor for interleukin-33 (IL-33) which plays crucial roles in innate and adaptive immunity, contributing to tissue homeostasis and responses to environmental stresses together with coreceptor IL1RAP. Its stimulation recruits MYD88, IRAK1, IRAK4, and TRAF6, followed by phosphorylation of MAPK3/ERK1 and/or MAPK1/ERK2, MAPK14, and MAPK8. Possibly involved in helper T-cell function. Upon tissue injury, induces UCP2-dependent mitochondrial rewiring that attenuates the generation of reactive oxygen species and preserves the integrity of Krebs cycle required for persistent production of itaconate and subsequent GATA3-dependent differentiation of inflammation-resolving alternatively activated macrophages. Inhibits IL-33 signaling. This Rattus norvegicus (Rat) protein is Interleukin-1 receptor-like 1 (Il1rl1).